The following is a 375-amino-acid chain: Fructose-1,6-bisphosphate aldolase/phosphatase (375 aa).

The active-site Proton acceptor; for FBP phosphatase activity is the aspartate 15. 4 residues coordinate Mg(2+): aspartate 15, histidine 22, aspartate 56, and aspartate 57. Residue histidine 22 coordinates beta-D-fructose 1,6-bisphosphate. A dihydroxyacetone phosphate-binding site is contributed by histidine 22. Tyrosine 94 is a binding site for beta-D-fructose 1,6-bisphosphate. Residue glutamine 98 coordinates Mg(2+). 107 to 108 (GN) provides a ligand contact to beta-D-fructose 1,6-bisphosphate. Aspartate 135 provides a ligand contact to Mg(2+). Residue lysine 136 coordinates beta-D-fructose 1,6-bisphosphate. Dihydroxyacetone phosphate is bound at residue lysine 136. Tyrosine 237 functions as the Proton donor/acceptor; for FBP aldolase activity in the catalytic mechanism. Lysine 240, aspartate 241, and aspartate 242 together coordinate Mg(2+). Lysine 240 functions as the Schiff-base intermediate with DHAP; for FBP aldolase activity in the catalytic mechanism. Beta-D-fructose 1,6-bisphosphate contacts are provided by residues 250–251 (QS), arginine 274, aspartate 295, and tyrosine 357. Dihydroxyacetone phosphate-binding residues include arginine 274 and aspartate 295.

The protein belongs to the FBP aldolase/phosphatase family. As to quaternary structure, homooctamer; dimer of tetramers. It depends on Mg(2+) as a cofactor.

It carries out the reaction beta-D-fructose 1,6-bisphosphate = D-glyceraldehyde 3-phosphate + dihydroxyacetone phosphate. It catalyses the reaction beta-D-fructose 1,6-bisphosphate + H2O = beta-D-fructose 6-phosphate + phosphate. It functions in the pathway carbohydrate biosynthesis; gluconeogenesis. FBPase activity is inhibited by Ca(2+), ATP, ADP and phosphoenolpyruvate. Catalyzes two subsequent steps in gluconeogenesis: the aldol condensation of dihydroxyacetone phosphate (DHAP) and glyceraldehyde-3-phosphate (GA3P) to fructose-1,6-bisphosphate (FBP), and the dephosphorylation of FBP to fructose-6-phosphate (F6P). Can also dephosphorylate, with lower activity, other related substrates including fructose-1-phosphate, fructose-6-phosphate, glucose-1-phosphate, glucose-6-phosphate, glycerol-2-phosphate, phosphoenolpyruvate, 5'-AMP, 6'-ADP and 7'-ATP. The protein is Fructose-1,6-bisphosphate aldolase/phosphatase of Thermococcus onnurineus (strain NA1).